We begin with the raw amino-acid sequence, 199 residues long: Pneumococcal vaccine antigen A homolog (199 aa).

The protein localises to the cell surface. In Streptococcus pyogenes serotype M3 (strain ATCC BAA-595 / MGAS315), this protein is Pneumococcal vaccine antigen A homolog (pvaA).